Here is a 103-residue protein sequence, read N- to C-terminus: Small ribosomal subunit protein uS10 (103 aa).

Belongs to the universal ribosomal protein uS10 family. Part of the 30S ribosomal subunit.

Functionally, involved in the binding of tRNA to the ribosomes. This is Small ribosomal subunit protein uS10 from Bordetella avium (strain 197N).